A 171-amino-acid polypeptide reads, in one-letter code: MNHFELFGLPNQFELDGGLLSAQFLELQKRFHPDNFATSSERDRLLSVQKAAQINDAYQTLKNPVTRAEYILSEQGHDIRGEQTTMQDPMFLMQQMELREDLEDLLSSSDPESALFDFSENVSAMRKTQLAELKQQLESELWQEAAQSVRKLKFIDKLNQEVEKLEDKLLG.

The 73-residue stretch at 2–74 (NHFELFGLPN…VTRAEYILSE (73 aa)) folds into the J domain.

It belongs to the HscB family. In terms of assembly, interacts with HscA and stimulates its ATPase activity.

Its function is as follows. Co-chaperone involved in the maturation of iron-sulfur cluster-containing proteins. Seems to help targeting proteins to be folded toward HscA. The polypeptide is Co-chaperone protein HscB homolog (Aliivibrio salmonicida (strain LFI1238) (Vibrio salmonicida (strain LFI1238))).